Here is a 226-residue protein sequence, read N- to C-terminus: 7-cyano-7-deazaguanine synthase (226 aa).

An ATP-binding site is contributed by 10-20 (LSGGLDSATAA). Residues Cys191, Cys199, Cys202, and Cys205 each contribute to the Zn(2+) site.

This sequence belongs to the QueC family. It depends on Zn(2+) as a cofactor.

The enzyme catalyses 7-carboxy-7-deazaguanine + NH4(+) + ATP = 7-cyano-7-deazaguanine + ADP + phosphate + H2O + H(+). It participates in purine metabolism; 7-cyano-7-deazaguanine biosynthesis. Catalyzes the ATP-dependent conversion of 7-carboxy-7-deazaguanine (CDG) to 7-cyano-7-deazaguanine (preQ(0)). The protein is 7-cyano-7-deazaguanine synthase of Prochlorococcus marinus (strain MIT 9303).